The chain runs to 506 residues: UPF0522 protein A (506 aa).

An N-terminal signal peptide occupies residues 1 to 18 (MIKSLLLLISIIIGIVIS). N-linked (GlcNAc...) asparagine glycosylation is found at Asn145, Asn155, Asn330, Asn366, Asn418, and Asn427.

Belongs to the UPF0522 family.

The protein resides in the secreted. In Dictyostelium discoideum (Social amoeba), this protein is UPF0522 protein A.